The chain runs to 587 residues: Folylpolyglutamate synthase, mitochondrial (587 aa).

The transit peptide at 1–42 (MSWARSRLCSTLSLAAVSARGATTEGAARRGMSAWPAPQEPG) directs the protein to the mitochondrion. Position 106–109 (106–109 (GKGS)) interacts with ATP. Mg(2+) contacts are provided by S130, E200, and H228. ATP-binding residues include R363 and D377. S539 bears the Phosphoserine mark.

This sequence belongs to the folylpolyglutamate synthase family. Monomer. A monovalent cation is required as a cofactor. With non-specific probe, highest content in kidney and liver and lowest in spleen, lung and small intestine, and readily detectable in all of the tumors except hepatoma. Isoform 1 and isoform 2 expressed in leukemic cells and isoform 4 and isoform 5 in liver cells. Isoform 1 and isoform 2 exclusively expressed in hepatoma and Lewis lung carcinoma. Isoform 1 and isoform 2 also expressed in bone marrow, small intestine and spleen. Kidney expresses isoform 1, isoform 2, isoform 4 and isoform 5.

It localises to the mitochondrion inner membrane. Its subcellular location is the mitochondrion matrix. The protein resides in the cytoplasm. The enzyme catalyses (6S)-5,6,7,8-tetrahydrofolyl-(gamma-L-Glu)(n) + L-glutamate + ATP = (6S)-5,6,7,8-tetrahydrofolyl-(gamma-L-Glu)(n+1) + ADP + phosphate + H(+). It functions in the pathway cofactor biosynthesis; tetrahydrofolylpolyglutamate biosynthesis. With respect to regulation, inhibited by ammonium sulfate. Inhibited by pentaglutamate derivative of DDATHF, but isoform 2 is inhibited to a greater extent at lower concentrations of the compound that is isoform 5. Isoform 5 is virtually unaffected by H(4)PteGlu(5) and 5,10-CH(2)-H(4)PteGlu(5) at concentrations that substantially inhibits the activity of isoform 2. Isoform 2 and 5 are equally sensitive to polyglutamates of 10-CHO-H(4)-PteGlu. Catalyzes conversion of folates to polyglutamate derivatives allowing concentration of folate compounds in the cell and the intracellular retention of these cofactors, which are important substrates for most of the folate-dependent enzymes that are involved in one-carbon transfer reactions involved in purine, pyrimidine and amino acid synthesis. Dihydrofolate, tetrahydrofolate, 5,10-methylenetetrahydrofolate, 10-formyltetrahydrofolate and 5-formyltetrahydrofolate are the best substrates. Folic acid and 5-methyltetrahydrofolate can also act as substrates. The sequence is that of Folylpolyglutamate synthase, mitochondrial (Fpgs) from Mus musculus (Mouse).